The primary structure comprises 315 residues: MDTRRLLLCLCLWVACVVSKPTEKKDRVHHDPQLSEKVHDDAQNFDYDHDAFLGAEEAKTFDQLTPEESKERLGMIVSKIDLDNDGYVTEGELTAWIKKAQKKYVYDNVERQWQEFDLNQDGLVSWDEYRNVTYGTYLDDPDPDNSFNYKQMMVRDERRFKMADQDGDLIATKEEFTAFLHPEEFDYMKDIVVLETMEDIDKNGDGLIDLEEYIGDMYNHDGDANEPEWVKTEREQFVEFRDKNHDGKMDKEETKDWILPSDYDHAEAESRHLVYESDQNKDSKLTREEIVDKYDLFVGSQATDFGEALVRHDEF.

An N-terminal signal peptide occupies residues 1–19 (MDTRRLLLCLCLWVACVVS). 6 EF-hand domains span residues 68 to 103 (ESKE…AQKK), 104 to 139 (YVYD…TYLD), 151 to 186 (QMMV…EEFD), 188 to 223 (MKDI…HDGD), 229 to 264 (WVKT…SDYD), and 265 to 300 (HAEA…FVGS). The Ca(2+) site is built by aspartate 81, aspartate 83, aspartate 85, tyrosine 87, glutamate 92, aspartate 117, asparagine 119, aspartate 121, and glutamate 128. A glycan (N-linked (GlcNAc...) asparagine) is linked at asparagine 131. Residues aspartate 164, aspartate 166, aspartate 168, glutamate 175, aspartate 201, asparagine 203, aspartate 205, glutamate 212, aspartate 242, asparagine 244, aspartate 246, lysine 248, glutamate 253, aspartate 278, asparagine 280, aspartate 282, lysine 284, and glutamate 289 each contribute to the Ca(2+) site. Residues 312–315 (HDEF) carry the Prevents secretion from ER motif.

The protein belongs to the CREC family. As to quaternary structure, interacts with ggcx.

It localises to the endoplasmic reticulum membrane. It is found in the golgi apparatus. The protein resides in the secreted. The protein localises to the melanosome. Its subcellular location is the sarcoplasmic reticulum lumen. Involved in regulation of vitamin K-dependent carboxylation of multiple N-terminal glutamate residues. Seems to inhibit gamma-carboxylase ggcx. Binds 7 calcium ions with a low affinity. The sequence is that of Calumenin (calu) from Xenopus tropicalis (Western clawed frog).